Reading from the N-terminus, the 208-residue chain is Thiamine-phosphate synthase (208 aa).

4-amino-2-methyl-5-(diphosphooxymethyl)pyrimidine is bound by residues 37–41 (QYREK) and Asn73. Residues Asp74 and Asp93 each coordinate Mg(2+). Residue Ser112 coordinates 4-amino-2-methyl-5-(diphosphooxymethyl)pyrimidine. 139 to 141 (TIS) contacts 2-[(2R,5Z)-2-carboxy-4-methylthiazol-5(2H)-ylidene]ethyl phosphate. Lys142 lines the 4-amino-2-methyl-5-(diphosphooxymethyl)pyrimidine pocket. 2-[(2R,5Z)-2-carboxy-4-methylthiazol-5(2H)-ylidene]ethyl phosphate is bound by residues Gly171 and 191-192 (IS).

This sequence belongs to the thiamine-phosphate synthase family. It depends on Mg(2+) as a cofactor.

It carries out the reaction 2-[(2R,5Z)-2-carboxy-4-methylthiazol-5(2H)-ylidene]ethyl phosphate + 4-amino-2-methyl-5-(diphosphooxymethyl)pyrimidine + 2 H(+) = thiamine phosphate + CO2 + diphosphate. The catalysed reaction is 2-(2-carboxy-4-methylthiazol-5-yl)ethyl phosphate + 4-amino-2-methyl-5-(diphosphooxymethyl)pyrimidine + 2 H(+) = thiamine phosphate + CO2 + diphosphate. It catalyses the reaction 4-methyl-5-(2-phosphooxyethyl)-thiazole + 4-amino-2-methyl-5-(diphosphooxymethyl)pyrimidine + H(+) = thiamine phosphate + diphosphate. The protein operates within cofactor biosynthesis; thiamine diphosphate biosynthesis; thiamine phosphate from 4-amino-2-methyl-5-diphosphomethylpyrimidine and 4-methyl-5-(2-phosphoethyl)-thiazole: step 1/1. Condenses 4-methyl-5-(beta-hydroxyethyl)thiazole monophosphate (THZ-P) and 2-methyl-4-amino-5-hydroxymethyl pyrimidine pyrophosphate (HMP-PP) to form thiamine monophosphate (TMP). This Listeria welshimeri serovar 6b (strain ATCC 35897 / DSM 20650 / CCUG 15529 / CIP 8149 / NCTC 11857 / SLCC 5334 / V8) protein is Thiamine-phosphate synthase.